Consider the following 475-residue polypeptide: Argininosuccinate lyase (475 aa).

Belongs to the lyase 1 family. Argininosuccinate lyase subfamily.

The protein localises to the cytoplasm. It carries out the reaction 2-(N(omega)-L-arginino)succinate = fumarate + L-arginine. It participates in amino-acid biosynthesis; L-arginine biosynthesis; L-arginine from L-ornithine and carbamoyl phosphate: step 3/3. The sequence is that of Argininosuccinate lyase from Streptomyces griseus subsp. griseus (strain JCM 4626 / CBS 651.72 / NBRC 13350 / KCC S-0626 / ISP 5235).